The primary structure comprises 394 residues: Phosphoglycerate kinase (394 aa).

Residues 21 to 23 (DFN), arginine 36, 59 to 62 (HLGR), arginine 118, and arginine 151 each bind substrate. The residue at position 183 (serine 183) is a Phosphoserine. Positions 201 and 292 each coordinate ATP. Residue threonine 299 is modified to Phosphothreonine. ATP-binding positions include glutamate 323 and 350–353 (GGDS).

It belongs to the phosphoglycerate kinase family. As to quaternary structure, monomer.

The protein resides in the cytoplasm. It carries out the reaction (2R)-3-phosphoglycerate + ATP = (2R)-3-phospho-glyceroyl phosphate + ADP. The protein operates within carbohydrate degradation; glycolysis; pyruvate from D-glyceraldehyde 3-phosphate: step 2/5. The chain is Phosphoglycerate kinase from Bacillus cereus (strain Q1).